A 71-amino-acid chain; its full sequence is Sec-independent protein translocase protein TatA (71 aa).

The chain crosses the membrane as a helical span at residues 1-21 (MGSFSIWHWLIVLVIVALIFG). Residues 48–71 (ADKTEQVTQQQTTIDVQAKEKQNS) form a disordered region.

The protein belongs to the TatA/E family. The Tat system comprises two distinct complexes: a TatABC complex, containing multiple copies of TatA, TatB and TatC subunits, and a separate TatA complex, containing only TatA subunits. Substrates initially bind to the TatABC complex, which probably triggers association of the separate TatA complex to form the active translocon.

It is found in the cell inner membrane. Its function is as follows. Part of the twin-arginine translocation (Tat) system that transports large folded proteins containing a characteristic twin-arginine motif in their signal peptide across membranes. TatA could form the protein-conducting channel of the Tat system. The protein is Sec-independent protein translocase protein TatA of Bordetella avium (strain 197N).